We begin with the raw amino-acid sequence, 94 residues long: Small ribosomal subunit protein bS18c (94 aa).

Belongs to the bacterial ribosomal protein bS18 family. In terms of assembly, part of the 30S ribosomal subunit.

The protein resides in the plastid. It localises to the chloroplast. This chain is Small ribosomal subunit protein bS18c, found in Manihot esculenta (Cassava).